The chain runs to 312 residues: Ribose-phosphate pyrophosphokinase (312 aa).

ATP is bound by residues 34–36 (DGE) and 93–94 (RQ). Residues H128 and D167 each contribute to the Mg(2+) site. K191 is an active-site residue. Residues R193 and D217 each coordinate D-ribose 5-phosphate.

It belongs to the ribose-phosphate pyrophosphokinase family. Class I subfamily. In terms of assembly, homohexamer. Requires Mg(2+) as cofactor.

The protein resides in the cytoplasm. It carries out the reaction D-ribose 5-phosphate + ATP = 5-phospho-alpha-D-ribose 1-diphosphate + AMP + H(+). Its pathway is metabolic intermediate biosynthesis; 5-phospho-alpha-D-ribose 1-diphosphate biosynthesis; 5-phospho-alpha-D-ribose 1-diphosphate from D-ribose 5-phosphate (route I): step 1/1. Its function is as follows. Involved in the biosynthesis of the central metabolite phospho-alpha-D-ribosyl-1-pyrophosphate (PRPP) via the transfer of pyrophosphoryl group from ATP to 1-hydroxyl of ribose-5-phosphate (Rib-5-P). The protein is Ribose-phosphate pyrophosphokinase of Baumannia cicadellinicola subsp. Homalodisca coagulata.